The chain runs to 380 residues: Ribosomal RNA large subunit methyltransferase F (380 aa).

2 disordered regions span residues 1 to 54 (MSHK…PRNA) and 260 to 279 (SQVM…ATDK). The segment covering 21-32 (QRQVVSKSSLQK) has biased composition (low complexity). A compositionally biased stretch (basic residues) spans 44-53 (QKSKALHPRN). The span at 260–270 (SQVMSPQVQPS) shows a compositional bias: low complexity.

Belongs to the methyltransferase superfamily. METTL16/RlmF family.

It localises to the cytoplasm. The enzyme catalyses adenosine(1618) in 23S rRNA + S-adenosyl-L-methionine = N(6)-methyladenosine(1618) in 23S rRNA + S-adenosyl-L-homocysteine + H(+). In terms of biological role, specifically methylates the adenine in position 1618 of 23S rRNA. In Shewanella pealeana (strain ATCC 700345 / ANG-SQ1), this protein is Ribosomal RNA large subunit methyltransferase F.